The primary structure comprises 83 residues: Apolipoprotein C-I, acidic form (83 aa).

An N-terminal signal peptide occupies residues 1-26 (MRLFLSLPVLVVVLSIVLEGPAPAQG).

This sequence belongs to the apolipoprotein C1 family.

The protein localises to the secreted. This chain is Apolipoprotein C-I, acidic form (APOC1A), found in Pan paniscus (Pygmy chimpanzee).